The chain runs to 236 residues: Probable transmembrane ascorbate ferrireductase 4 (236 aa).

The Cytochrome b561 domain occupies 14 to 210 (FARLSGLVVA…LGCIVITAAI (197 aa)). 3 helical membrane-spanning segments follow: residues 17–37 (LSGL…PNLG), 42–62 (TLHP…AILI), and 76–96 (VHLW…WTKF). Residues His44, His77, and His110 each coordinate heme b. The next 3 membrane-spanning stretches (helical) occupy residues 112 to 132 (WMGL…FMSF), 144 to 164 (TFLP…IATA), and 191 to 211 (VNGL…AAIL). His149 is a heme b binding site.

In terms of assembly, homodimer. Heme b is required as a cofactor.

The protein resides in the membrane. The enzyme catalyses Fe(3+)(out) + L-ascorbate(in) = monodehydro-L-ascorbate radical(in) + Fe(2+)(out) + H(+). Its function is as follows. Two-heme-containing cytochrome. May catalyze ascorbate-dependent trans-membrane ferric-chelate reduction. The polypeptide is Probable transmembrane ascorbate ferrireductase 4 (CYB561D) (Arabidopsis thaliana (Mouse-ear cress)).